The chain runs to 906 residues: NADH-quinone oxidoreductase subunit G (906 aa).

A 2Fe-2S ferredoxin-type domain is found at 2–83 (AKIYVDSKIY…GAIISIKSTE (82 aa)). The [2Fe-2S] cluster site is built by Cys-34, Cys-45, Cys-48, and Cys-67. The region spanning 83–122 (ESEVFRSAIVELLLTNHPHDCPVCEEGGHCHLQDMTVMVK) is the 4Fe-4S His(Cys)3-ligated-type domain. [4Fe-4S] cluster is bound by residues His-99, Cys-103, Cys-106, Cys-112, Cys-151, Cys-154, Cys-157, Cys-201, Cys-228, Cys-231, Cys-235, and Cys-263. The region spanning 221 to 277 (MQYAPGICHNCSVGCNISIGERYGEIRRIENRYHENINHYLICDLGRFGYSHTNLNT) is the 4Fe-4S Mo/W bis-MGD-type domain.

The protein belongs to the complex I 75 kDa subunit family. In terms of assembly, composed of 13 different subunits. Subunits NuoCD, E, F, and G constitute the peripheral sector of the complex. The cofactor is [2Fe-2S] cluster. [4Fe-4S] cluster serves as cofactor.

The enzyme catalyses a quinone + NADH + 5 H(+)(in) = a quinol + NAD(+) + 4 H(+)(out). Its function is as follows. NDH-1 shuttles electrons from NADH, via FMN and iron-sulfur (Fe-S) centers, to quinones in the respiratory chain. Couples the redox reaction to proton translocation (for every two electrons transferred, four hydrogen ions are translocated across the cytoplasmic membrane), and thus conserves the redox energy in a proton gradient. This chain is NADH-quinone oxidoreductase subunit G (nuoG), found in Buchnera aphidicola subsp. Acyrthosiphon pisum (strain APS) (Acyrthosiphon pisum symbiotic bacterium).